Reading from the N-terminus, the 128-residue chain is Probable heavy metal-dependent transcriptional regulator HI_0293 (128 aa).

One can recognise an HTH merR-type domain in the interval 1 to 69; it reads MNISEAAKLV…LHQIAQLLAL (69 aa). Positions 4-23 form a DNA-binding region, H-T-H motif; sequence SEAAKLVGLSTKQIRDYEKM.

The protein localises to the cytoplasm. Functionally, could be a copper-dependent transcriptional activator of the ATPase HI_0290. The protein is Probable heavy metal-dependent transcriptional regulator HI_0293 of Haemophilus influenzae (strain ATCC 51907 / DSM 11121 / KW20 / Rd).